The chain runs to 573 residues: MNVEELIMKYALINAISHKGKANPKAVIGKVLGENPELRPKAKEIIPLVNQIVEQVNGMDIEEQEAKLKEIYPEFFEAKKEKKEEKKGLPPLPKAEKGKVVTRFAPNPDGAFHLGNARAAILSHEYARLYGGKFILRFDDTDPKVKRPEPKFYEWIIEDLKWLGFQIDEIHIASDRLEIYYKYAEELIKMGKAYVCTCPPEKFRELRDNGIACPHREEPVEVQLERWRKMLNGEYKEGEAVVRIKTDLKHPNPAVRDWPALRIIDNPSHPRTGDKYRVWPLYNFASAIDDHELGVTHIFRGQEHAENETRQRYIYDYFGWEYPVTVHHGRLSIEGVILSKSKTRKGIDEGKYFGWDDPRLGTIRALKRRGIRPEAIRELIIEVGLKRSDTTISWDNLAAINRRIVEPIANRYFFVADPIPMYIEGYDEEFVAEIPLHPDHPDRGVRKLKFEPGRPVYVSKDDMELFKPGSFVRLKDLFNVEILEVSEEGIKARFHSIEYEIARENRWRMVHWVTEGRACGVLIPQGDELIVRKGLLESDANVKVDDVVQFERFGFVRIDDVTPEKVVAIFAHK.

The short motif at 106-116 (PNPDGAFHLGN) is the 'HIGH' region element.

It belongs to the class-I aminoacyl-tRNA synthetase family. Glutamate--tRNA ligase type 2 subfamily.

The protein resides in the cytoplasm. It catalyses the reaction tRNA(Glu) + L-glutamate + ATP = L-glutamyl-tRNA(Glu) + AMP + diphosphate. Catalyzes the attachment of glutamate to tRNA(Glu) in a two-step reaction: glutamate is first activated by ATP to form Glu-AMP and then transferred to the acceptor end of tRNA(Glu). The sequence is that of Glutamate--tRNA ligase from Thermococcus onnurineus (strain NA1).